We begin with the raw amino-acid sequence, 290 residues long: Transposon Ty3-G Gag polyprotein (290 aa).

Position 2 is an N-acetylserine (S2). The segment at 265-282 (RLCFYCKKEGHRLNECRA) adopts a CCHC-type zinc-finger fold.

It is found in the cytoplasm. Its function is as follows. Capsid protein (CA) is the structural component of the virus-like particle (VLP), forming the shell that encapsulates the retrotransposons dimeric RNA genome. In terms of biological role, nucleocapsid protein p9 (NC) forms the nucleocore that coats the retro-elements dimeric RNA. Binds these RNAs through its zinc fingers. Promotes primer tRNA(i)-Met annealing to the multipartite primer-binding site (PBS), dimerization of Ty3 RNA and initiation of reverse transcription. The chain is Transposon Ty3-G Gag polyprotein (TY3A-G) from Saccharomyces cerevisiae (strain ATCC 204508 / S288c) (Baker's yeast).